Consider the following 335-residue polypeptide: Protein STRICTOSIDINE SYNTHASE-LIKE 12 (335 aa).

An N-terminal signal peptide occupies residues 1-22; the sequence is MTSFCSMISLLLLLSLSSAVFS. A glycan (N-linked (GlcNAc...) asparagine) is linked at N80.

Belongs to the strictosidine synthase family.

The protein localises to the vacuole. It carries out the reaction 3alpha(S)-strictosidine + H2O = secologanin + tryptamine. It participates in alkaloid biosynthesis; 3alpha(S)-strictosidine biosynthesis; 3alpha(S)-strictosidine from secologanin and tryptamine: step 1/1. Catalyzes the stereospecific condensation of tryptamine with secologanin to form strictosidine, the key intermediate of indole alkaloid biosynthesis. This Arabidopsis thaliana (Mouse-ear cress) protein is Protein STRICTOSIDINE SYNTHASE-LIKE 12.